The sequence spans 88 residues: uncharacterized protein (88 aa).

Residues 39–63 form a dksA C4-type zinc finger; the sequence is CEECGAPIPQARREAIPGVRLCIHC.

This is an uncharacterized protein from Escherichia coli (strain K12).